Here is a 308-residue protein sequence, read N- to C-terminus: Glutaminase (308 aa).

Residues Ser66, Asn117, Glu161, Asn168, Tyr192, Tyr244, and Val262 each contribute to the substrate site.

It belongs to the glutaminase family. Homotetramer.

The catalysed reaction is L-glutamine + H2O = L-glutamate + NH4(+). This is Glutaminase from Shigella dysenteriae serotype 1 (strain Sd197).